The primary structure comprises 159 residues: Ribosomal RNA large subunit methyltransferase H (159 aa).

S-adenosyl-L-methionine-binding positions include Leu-76, Gly-108, and 127–132 (FGRLTL).

This sequence belongs to the RNA methyltransferase RlmH family. Homodimer.

It localises to the cytoplasm. The enzyme catalyses pseudouridine(1915) in 23S rRNA + S-adenosyl-L-methionine = N(3)-methylpseudouridine(1915) in 23S rRNA + S-adenosyl-L-homocysteine + H(+). Specifically methylates the pseudouridine at position 1915 (m3Psi1915) in 23S rRNA. The sequence is that of Ribosomal RNA large subunit methyltransferase H from Listeria welshimeri serovar 6b (strain ATCC 35897 / DSM 20650 / CCUG 15529 / CIP 8149 / NCTC 11857 / SLCC 5334 / V8).